The following is a 336-amino-acid chain: Vacuolar protein sorting-associated protein 26B (336 aa).

Residues Ser-302, Ser-304, and Ser-319 each carry the phosphoserine modification.

Belongs to the VPS26 family. In terms of assembly, component of the heterotrimeric retromer cargo-selective complex (CSC), also described as vacuolar protein sorting subcomplex (VPS), formed by VPS26 (VPS26A or VPS26B), VPS29 and VPS35. The CSC has a highly elongated structure with VPS26 and VPS29 binding independently at opposite distal ends of VPS35 as central platform. The CSC is believed to associate with variable sorting nexins to form functionally distinct retromer complex variants. The originally described SNX-BAR retromer is a pentamer containing the CSC and a heterodimeric membrane-deforming subcomplex formed between SNX1 or SNX2 and SNX5 or SNX6 (also called SNX-BAR subcomplex); the respective CSC and SNX-BAR subcomplexes associate with low affinity. The CSC associates with SNX3 to form a SNX3-retromer complex. The CSC associates with SNX27, the WASH complex and the SNX-BAR subcomplex to form the SNX27-retromer complex. Interacts with VPS29, VPS35, TBC1D5, GOLPH3, SNX27.

It localises to the cytoplasm. Its subcellular location is the membrane. The protein localises to the early endosome. The protein resides in the late endosome. Functionally, acts as a component of the retromer cargo-selective complex (CSC). The CSC is believed to be the core functional component of retromer or respective retromer complex variants acting to prevent missorting of selected transmembrane cargo proteins into the lysosomal degradation pathway. The recruitment of the CSC to the endosomal membrane involves RAB7A and SNX3. The SNX-BAR retromer mediates retrograde transport of cargo proteins from endosomes to the trans-Golgi network (TGN) and is involved in endosome-to-plasma membrane transport for cargo protein recycling. The SNX3-retromer mediates the retrograde transport of WLS distinct from the SNX-BAR retromer pathway. The SNX27-retromer is believed to be involved in endosome-to-plasma membrane trafficking and recycling of a broad spectrum of cargo proteins. The CSC seems to act as recruitment hub for other proteins, such as the WASH complex and TBC1D5. May be involved in retrograde transport of SORT1 but not of IGF2R. Acts redundantly with VSP26A in SNX-27 mediated endocytic recycling of SLC2A1/GLUT1. The protein is Vacuolar protein sorting-associated protein 26B (VPS26B) of Pongo abelii (Sumatran orangutan).